Reading from the N-terminus, the 368-residue chain is Putative agmatine deiminase (368 aa).

The Amidino-cysteine intermediate role is filled by cysteine 359.

It belongs to the agmatine deiminase family.

It catalyses the reaction agmatine + H2O = N-carbamoylputrescine + NH4(+). The polypeptide is Putative agmatine deiminase (Pectobacterium atrosepticum (strain SCRI 1043 / ATCC BAA-672) (Erwinia carotovora subsp. atroseptica)).